The chain runs to 912 residues: Nitrate reductase [NADH] (912 aa).

The disordered stretch occupies residues 1 to 99 (SVEPRQPFGR…PRDEGTADAW (99 aa)). The span at 13 to 23 (APATAPTARAP) shows a compositional bias: low complexity. The span at 54–68 (AEEDEEDDDEDDEGH) shows a compositional bias: acidic residues. Basic and acidic residues predominate over residues 85 to 94 (PSTRDPRDEG). C186 serves as a coordination point for Mo-molybdopterin. The Cytochrome b5 heme-binding domain occupies 535-610 (DKQFTMSEVR…LDTYRIGELI (76 aa)). Positions 570 and 593 each coordinate heme. The FAD-binding FR-type domain maps to 651 to 764 (REKVPCRLVD…KGPLGHVEYT (114 aa)). FAD contacts are provided by residues 703–706 (RAYT), 720–724 (LVKVY), F725, F732, 737–739 (LMT), S788, and T791.

It belongs to the nitrate reductase family. As to quaternary structure, homodimer. Requires FAD as cofactor. Heme serves as cofactor. It depends on Mo-molybdopterin as a cofactor.

The catalysed reaction is nitrite + NAD(+) + H2O = nitrate + NADH + H(+). In terms of biological role, nitrate reductase is a key enzyme involved in the first step of nitrate assimilation in plants, fungi and bacteria. The sequence is that of Nitrate reductase [NADH] from Hordeum vulgare (Barley).